A 128-amino-acid polypeptide reads, in one-letter code: Large ribosomal subunit protein eL32 (128 aa).

Belongs to the eukaryotic ribosomal protein eL32 family.

The sequence is that of Large ribosomal subunit protein eL32 (rpl32e) from Thermoplasma volcanium (strain ATCC 51530 / DSM 4299 / JCM 9571 / NBRC 15438 / GSS1).